We begin with the raw amino-acid sequence, 62 residues long: Photosystem II reaction center protein Z (62 aa).

The next 2 helical transmembrane spans lie at 8 to 28 (ALFA…VVLA) and 41 to 61 (FSGI…NSFV).

This sequence belongs to the PsbZ family. As to quaternary structure, PSII is composed of 1 copy each of membrane proteins PsbA, PsbB, PsbC, PsbD, PsbE, PsbF, PsbH, PsbI, PsbJ, PsbK, PsbL, PsbM, PsbT, PsbY, PsbZ, Psb30/Ycf12, at least 3 peripheral proteins of the oxygen-evolving complex and a large number of cofactors. It forms dimeric complexes.

It localises to the plastid. The protein resides in the chloroplast thylakoid membrane. Functionally, may control the interaction of photosystem II (PSII) cores with the light-harvesting antenna, regulates electron flow through the 2 photosystem reaction centers. PSII is a light-driven water plastoquinone oxidoreductase, using light energy to abstract electrons from H(2)O, generating a proton gradient subsequently used for ATP formation. The chain is Photosystem II reaction center protein Z from Chlorella vulgaris (Green alga).